The primary structure comprises 398 residues: Glucose-1-phosphate adenylyltransferase (398 aa).

Alpha-D-glucose 1-phosphate-binding positions include Tyr-100, Gly-165, 180 to 181 (EK), and Ser-191.

Belongs to the bacterial/plant glucose-1-phosphate adenylyltransferase family. As to quaternary structure, homotetramer.

The enzyme catalyses alpha-D-glucose 1-phosphate + ATP + H(+) = ADP-alpha-D-glucose + diphosphate. The protein operates within glycan biosynthesis; glycogen biosynthesis. Functionally, involved in the biosynthesis of ADP-glucose, a building block required for the elongation reactions to produce glycogen. Catalyzes the reaction between ATP and alpha-D-glucose 1-phosphate (G1P) to produce pyrophosphate and ADP-Glc. The chain is Glucose-1-phosphate adenylyltransferase from Desulfitobacterium hafniense (strain DSM 10664 / DCB-2).